The sequence spans 143 residues: FAD synthase (143 aa).

ATP contacts are provided by residues 13–14 (TF), 18–21 (HPGH), and Asp-96.

The protein belongs to the archaeal FAD synthase family. As to quaternary structure, homodimer. Requires a divalent metal cation as cofactor.

It carries out the reaction FMN + ATP + H(+) = FAD + diphosphate. The protein operates within cofactor biosynthesis; FAD biosynthesis; FAD from FMN: step 1/1. Its function is as follows. Catalyzes the transfer of the AMP portion of ATP to flavin mononucleotide (FMN) to produce flavin adenine dinucleotide (FAD) coenzyme. This chain is FAD synthase, found in Methanothrix thermoacetophila (strain DSM 6194 / JCM 14653 / NBRC 101360 / PT) (Methanosaeta thermophila).